Reading from the N-terminus, the 406-residue chain is MSKLYVGSEVGQLRRVLLNRPERALTHLTPSNCHELLFDDVLAVEAAGEEHDAFARTLREQDVEVLLLHDLLVETLAVPEAKQWLLNTQISDFRYGPTFARDLRQYFAEMDDEHLASILLGGLAYSELPIKSSSMLPKMKRPLDFVIEPLPNHLFTRDTSCWVYGGVSLNPMMMPARQRETNHLRAIYRWHPTFAGQDFINYFGDEDQHYDNANVEGGDVLVIGKGAVLIGMSERTTPQGVENLAASLFKSGQAKEVIAIDLPKHRSCMHLDTVMTHMDVDTFSVYPEIMRKDLDTWRLTPKGNGEMHVEASHNYLHAIESALGLDQLKIITTGGDSYEAEREQWNDANNVLTVKPGVVIGYERNVYTNEKYDKAGIEVLTIPGNELGRGRGGARCMSCPIERDDI.

Cys396 serves as the catalytic Amidino-cysteine intermediate.

It belongs to the arginine deiminase family.

It localises to the cytoplasm. It carries out the reaction L-arginine + H2O = L-citrulline + NH4(+). It functions in the pathway amino-acid degradation; L-arginine degradation via ADI pathway; carbamoyl phosphate from L-arginine: step 1/2. The sequence is that of Arginine deiminase from Vibrio campbellii (strain ATCC BAA-1116).